A 582-amino-acid chain; its full sequence is MGDVLISDRPPSPARLSHTSEKHPRVTLTELNVLRRHRELCDVVINVSGRKIFAHRVILSACSPYFRAMFTGELEESRQTEVTIRDIDENAMELLIDFCYTSHIVVEESNVQTLLPAACLLQLAEIQDICCEFLKRQLDPTNCLGIRAFADTHSCRELLRIADKFTQHNFQEVMESEEFLLLPVGQLVDIICSDELNVRSEEQVFNAVMAWLKYNVAERRQHLAQVLQHVRMPLLSPKFLVGTVGSDLLVRSDEACRDLVDEAKNYLLLPQERPLMQGPRTRPRKPTRRGEVLFAVGGWCSGDAIASVERFDPETADWKMVAPMSKRRCGVGVAVLNDLLYAVGGHDGQSYLNSIERYDPQTNQWSCDVAPTTSCRTSVGVAVLDGFLYAVGGQDGVQCLNHVERYDPKENKWSKVAPMTTRRLGVAVAVLGGYLYAIGGSDGQCPLNTVERYDPRQNKWCAVSPMSTRRKHLGCAVFNNFIYAVGGRDDCMELSSAERYNPHTNSWSPIVAMTSRRSGVGLAVVNGQLYAVGGFDGTAYLKTIEVYDPETNQWRLCGCMNYRRLGGGVGVMRAPQTENYMW.

The interval 1–22 is disordered; the sequence is MGDVLISDRPPSPARLSHTSEK. The 68-residue stretch at 41–108 folds into the BTB domain; the sequence is CDVVINVSGR…CYTSHIVVEE (68 aa). Residues 143-245 form the BACK domain; sequence CLGIRAFADT…SPKFLVGTVG (103 aa). 6 Kelch repeats span residues 292–338, 340–386, 387–433, 435–480, 482–527, and 528–574; these read VLFA…VLND, LYAV…VLDG, FLYA…VLGG, LYAI…VFNN, IYAV…VVNG, and QLYA…VMRA.

It participates in protein modification; protein ubiquitination. Functionally, probable substrate-specific adapter of an E3 ubiquitin-protein ligase complex which mediates the ubiquitination and subsequent proteasomal degradation of target proteins. May have a role in synapse differentiation and growth. The chain is Kelch-like protein diablo from Culex quinquefasciatus (Southern house mosquito).